We begin with the raw amino-acid sequence, 175 residues long: uncharacterized protein (175 aa).

The Macro domain occupies 1–173 (MYKNIIKLIS…VYKEKYKKLL (173 aa)).

It belongs to the MacroD-type family.

This is an uncharacterized protein from Fusobacterium nucleatum subsp. nucleatum (strain ATCC 25586 / DSM 15643 / BCRC 10681 / CIP 101130 / JCM 8532 / KCTC 2640 / LMG 13131 / VPI 4355).